A 459-amino-acid chain; its full sequence is MQIQFHLYNTLSRTKEVFNPQDQANVKMYVCGPTVYYNPHIGNSRSGVVYDLLYRIVIKIFGEKAVKYVRNITDVDDKIIDRAALLGVTIDELTDKVTKEFHKNMAYLGCMLPSIEPKATKHIDVMIAIIERLIAKDHAYIADNHVYFDVLSAPNYTELSNRNLEEMFEGVHVENSKTKKNPQDFVLWKPAKQNESANMNFESPWGLGRPGWHIECSAMSYKYLGENFDIHGGGADLIFPHHTNEIAQSRCAFPSSTYAKYWVHNGFLTVNGEKMSKSLGNFITVRDLMDKQIQGEVVRLFLLSSHYRRPLDYNDKAIEDAKKTLDYWYRAIENINVQKIDLPHDFMQSLLDDMNTPLAVKIINDYAKGVFISKTEEERQLNASAIITCANFIGLMNKTPHEWFNSGVDELYVNELVNKRLEAKKQKNWLLADQIRNQLLEEKIILEDRPDGTTIWRKE.

A Zn(2+)-binding site is contributed by cysteine 31. The 'HIGH' region signature appears at 33 to 43 (PTVYYNPHIGN). Zn(2+) contacts are provided by cysteine 216, histidine 241, and glutamate 245. The 'KMSKS' region motif lies at 274 to 278 (KMSKS). Lysine 277 is a binding site for ATP.

It belongs to the class-I aminoacyl-tRNA synthetase family. Monomer. Zn(2+) is required as a cofactor.

The protein localises to the cytoplasm. The catalysed reaction is tRNA(Cys) + L-cysteine + ATP = L-cysteinyl-tRNA(Cys) + AMP + diphosphate. This Rickettsia conorii (strain ATCC VR-613 / Malish 7) protein is Cysteine--tRNA ligase.